We begin with the raw amino-acid sequence, 139 residues long: Thyrotropin subunit beta (139 aa).

The N-terminal stretch at 1-20 (MELSVAMCGLLCLLFSQAVP) is a signal peptide. Intrachain disulfides connect Cys22-Cys72, Cys36-Cys87, Cys39-Cys127, Cys47-Cys103, Cys51-Cys105, and Cys108-Cys115. N-linked (GlcNAc...) asparagine glycosylation is present at Asn43.

The protein belongs to the glycoprotein hormones subunit beta family. In terms of assembly, heterodimer of a common alpha chain and a unique beta chain which confers biological specificity to thyrotropin, lutropin, follitropin and gonadotropin.

It localises to the secreted. Its function is as follows. Indispensable for the control of thyroid structure and metabolism. May play some role in the biological processes of the immature fishes. This chain is Thyrotropin subunit beta (tshb), found in Salmo salar (Atlantic salmon).